A 532-amino-acid chain; its full sequence is Small ribosomal subunit protein uS2cz (532 aa).

An N-terminal extension region spans residues 1 to 271 (METLEKNFKK…SPISSKEKKA (271 aa)). 3 TRAM domains span residues 38-97 (ALQA…SILN), 127-186 (DFKV…KPIL), and 197-260 (NQMI…KILK).

The protein belongs to the universal ribosomal protein uS2 family.

It is found in the plastid. It localises to the chloroplast. This is Small ribosomal subunit protein uS2cz (rps2-1) from Tetradesmus obliquus (Green alga).